The sequence spans 134 residues: Ribosome-binding factor A (134 aa).

This sequence belongs to the RbfA family. Monomer. Binds 30S ribosomal subunits, but not 50S ribosomal subunits or 70S ribosomes.

It localises to the cytoplasm. Its function is as follows. One of several proteins that assist in the late maturation steps of the functional core of the 30S ribosomal subunit. Associates with free 30S ribosomal subunits (but not with 30S subunits that are part of 70S ribosomes or polysomes). Required for efficient processing of 16S rRNA. May interact with the 5'-terminal helix region of 16S rRNA. This Tolumonas auensis (strain DSM 9187 / NBRC 110442 / TA 4) protein is Ribosome-binding factor A.